The following is a 161-amino-acid chain: Putative acetyltransferase SAV0762 (161 aa).

Belongs to the transferase hexapeptide repeat family.

The protein is Putative acetyltransferase SAV0762 of Staphylococcus aureus (strain Mu50 / ATCC 700699).